Reading from the N-terminus, the 475-residue chain is Pregnancy-specific glycoprotein 22 (475 aa).

Residues 1–35 (MEVSSELLSNGWTSWQRVLLTASLLTCWLLPITAG) form the signal peptide. 3 Ig-like V-type domains span residues 44–140 (KLVE…FLQV), 162–260 (PASV…YLQV), and 280–380 (PVPP…QVNV). Residues asparagine 103, asparagine 110, and asparagine 231 are each glycosylated (N-linked (GlcNAc...) asparagine). An Ig-like C2-type domain is found at 387-471 (PVMRVTDSTV…SKTSLPVRLT (85 aa)). Cysteine 406 and cysteine 454 are oxidised to a cystine.

The protein belongs to the immunoglobulin superfamily. CEA family.

The protein resides in the secreted. May have an angiogenic function during early placental development. Binds to cell-surface heparan sulfate proteoglycans (HSPGs), and stimulates secretion of the proangiogenic factors VEGFA and TGFB from uterine dendritic cells and natural killer cells. Also induces endothelial tube formation in vitro. The protein is Pregnancy-specific glycoprotein 22 of Mus musculus (Mouse).